Here is a 350-residue protein sequence, read N- to C-terminus: 4-hydroxythreonine-4-phosphate dehydrogenase (350 aa).

2 residues coordinate substrate: His-138 and Thr-139. Positions 173, 218, and 273 each coordinate a divalent metal cation. The substrate site is built by Lys-281, Asn-290, and Arg-299.

This sequence belongs to the PdxA family. In terms of assembly, homodimer. The cofactor is Zn(2+). Requires Mg(2+) as cofactor. Co(2+) is required as a cofactor.

It localises to the cytoplasm. It carries out the reaction 4-(phosphooxy)-L-threonine + NAD(+) = 3-amino-2-oxopropyl phosphate + CO2 + NADH. It participates in cofactor biosynthesis; pyridoxine 5'-phosphate biosynthesis; pyridoxine 5'-phosphate from D-erythrose 4-phosphate: step 4/5. Its function is as follows. Catalyzes the NAD(P)-dependent oxidation of 4-(phosphooxy)-L-threonine (HTP) into 2-amino-3-oxo-4-(phosphooxy)butyric acid which spontaneously decarboxylates to form 3-amino-2-oxopropyl phosphate (AHAP). The polypeptide is 4-hydroxythreonine-4-phosphate dehydrogenase (Xanthobacter autotrophicus (strain ATCC BAA-1158 / Py2)).